The sequence spans 852 residues: 2-deoxy-glucose resistant protein 2 (852 aa).

The segment covering 1-18 has biased composition (polar residues); sequence MFKSKTSTLSYDETPNSN. The interval 1-60 is disordered; it reads MFKSKTSTLSYDETPNSNEGDRNATPVNPKEKSQTKHLNIPGDRSRHSSIADSKRSSSRY. WD repeat units lie at residues 171–210, 278–316, 318–358, 426–471, 476–515, and 651–689; these read LFKNSICCCTFSHDGKYMVIGCKDGSLHLWKVINSPVKRS, EHALDILDANWSKNGFLITASMDKTAKLWHPERKYSLKT, VHPD…VSYA, QHGP…ELFK, GSSRHRGQFLMMKNEPVVFTGSDDHWFYTWKMQSFNLSAE, and GFSSNLSNVVNNVGTILITTDSQGLIRVFRTDILPEIRK. Ser-716 carries the phosphoserine modification. The interval 723–748 is disordered; sequence DERSSTEDNEFSTTPPSNTHNSRPSH. Positions 733-744 are enriched in polar residues; it reads FSTTPPSNTHNS.

Belongs to the WD repeat DGR2 family.

The chain is 2-deoxy-glucose resistant protein 2 (DGR2) from Saccharomyces cerevisiae (strain ATCC 204508 / S288c) (Baker's yeast).